The following is a 616-amino-acid chain: UvrABC system protein C (616 aa).

Residues 12-91 (ESPGVYLWKD…IKEYHPRFNI (80 aa)) form the GIY-YIG domain. Positions 202-237 (SDVMHHVRERMLDASERLDFERAAELRDALAHLEKM) constitute a UVR domain.

The protein belongs to the UvrC family. Interacts with UvrB in an incision complex.

It localises to the cytoplasm. Its function is as follows. The UvrABC repair system catalyzes the recognition and processing of DNA lesions. UvrC both incises the 5' and 3' sides of the lesion. The N-terminal half is responsible for the 3' incision and the C-terminal half is responsible for the 5' incision. The sequence is that of UvrABC system protein C from Gemmatimonas aurantiaca (strain DSM 14586 / JCM 11422 / NBRC 100505 / T-27).